The primary structure comprises 229 residues: tRNA (guanine-N(7)-)-methyltransferase (229 aa).

4 residues coordinate S-adenosyl-L-methionine: Glu59, Glu84, Asp111, and Asp134. Residue Asp134 is part of the active site. Substrate is bound by residues Lys138, Asp170, and 205–208 (TKFE).

Belongs to the class I-like SAM-binding methyltransferase superfamily. TrmB family.

The catalysed reaction is guanosine(46) in tRNA + S-adenosyl-L-methionine = N(7)-methylguanosine(46) in tRNA + S-adenosyl-L-homocysteine. It participates in tRNA modification; N(7)-methylguanine-tRNA biosynthesis. Catalyzes the formation of N(7)-methylguanine at position 46 (m7G46) in tRNA. The chain is tRNA (guanine-N(7)-)-methyltransferase from Nitrosospira multiformis (strain ATCC 25196 / NCIMB 11849 / C 71).